Reading from the N-terminus, the 305-residue chain is UDP-3-O-acyl-N-acetylglucosamine deacetylase (305 aa).

His-79, His-238, and Asp-242 together coordinate Zn(2+). The active-site Proton donor is the His-265.

Belongs to the LpxC family. Zn(2+) serves as cofactor.

The catalysed reaction is a UDP-3-O-[(3R)-3-hydroxyacyl]-N-acetyl-alpha-D-glucosamine + H2O = a UDP-3-O-[(3R)-3-hydroxyacyl]-alpha-D-glucosamine + acetate. It functions in the pathway glycolipid biosynthesis; lipid IV(A) biosynthesis; lipid IV(A) from (3R)-3-hydroxytetradecanoyl-[acyl-carrier-protein] and UDP-N-acetyl-alpha-D-glucosamine: step 2/6. Functionally, catalyzes the hydrolysis of UDP-3-O-myristoyl-N-acetylglucosamine to form UDP-3-O-myristoylglucosamine and acetate, the committed step in lipid A biosynthesis. The protein is UDP-3-O-acyl-N-acetylglucosamine deacetylase of Enterobacter sp. (strain 638).